A 303-amino-acid polypeptide reads, in one-letter code: Lipase chaperone (303 aa).

The helical transmembrane segment at Thr7–Asp23 threads the bilayer.

Belongs to the lipase chaperone family.

It is found in the cell inner membrane. In terms of biological role, may be involved in the folding of the extracellular lipase during its passage through the periplasm. This chain is Lipase chaperone (lifO), found in Chromobacterium violaceum (strain ATCC 12472 / DSM 30191 / JCM 1249 / CCUG 213 / NBRC 12614 / NCIMB 9131 / NCTC 9757 / MK).